The chain runs to 585 residues: uncharacterized protein (585 aa).

Helical transmembrane passes span 18–38 (FMWS…YPII), 55–75 (AAWV…ATFF), 128–148 (FFLS…AISL), 150–170 (VMFY…PFLA), 238–258 (IWSA…VALL), and 276–296 (VAFF…GFVI). Positions 18–301 (FMWSLLAMLL…LGFVINMFSQ (284 aa)) constitute an ABC transmembrane type-1 domain. An ABC transporter domain is found at 335 to 570 (VHFKNVSLAY…GGYYKKIYDL (236 aa)). An ATP-binding site is contributed by 369–376 (GPTGSGKS).

It belongs to the ABC transporter superfamily.

It is found in the cell membrane. This is an uncharacterized protein from Bacillus subtilis (strain 168).